The sequence spans 247 residues: Pyridoxine 5'-phosphate synthase (247 aa).

Position 7 (Asn7) interacts with 3-amino-2-oxopropyl phosphate. Residue 9–10 (DH) coordinates 1-deoxy-D-xylulose 5-phosphate. Arg18 provides a ligand contact to 3-amino-2-oxopropyl phosphate. The active-site Proton acceptor is His43. 1-deoxy-D-xylulose 5-phosphate is bound by residues Arg45 and His50. The Proton acceptor role is filled by Glu70. A 1-deoxy-D-xylulose 5-phosphate-binding site is contributed by Thr100. His190 serves as the catalytic Proton donor. 3-amino-2-oxopropyl phosphate is bound by residues Gly191 and 212-213 (GH).

The protein belongs to the PNP synthase family. In terms of assembly, homooctamer; tetramer of dimers.

It localises to the cytoplasm. It carries out the reaction 3-amino-2-oxopropyl phosphate + 1-deoxy-D-xylulose 5-phosphate = pyridoxine 5'-phosphate + phosphate + 2 H2O + H(+). Its pathway is cofactor biosynthesis; pyridoxine 5'-phosphate biosynthesis; pyridoxine 5'-phosphate from D-erythrose 4-phosphate: step 5/5. In terms of biological role, catalyzes the complicated ring closure reaction between the two acyclic compounds 1-deoxy-D-xylulose-5-phosphate (DXP) and 3-amino-2-oxopropyl phosphate (1-amino-acetone-3-phosphate or AAP) to form pyridoxine 5'-phosphate (PNP) and inorganic phosphate. The protein is Pyridoxine 5'-phosphate synthase of Synechococcus sp. (strain WH7803).